The following is a 227-amino-acid chain: Glutathione S-transferase U18 (227 aa).

One can recognise a GST N-terminal domain in the interval 4–83 (EDVKLIGSWA…YIDEAWNSSG (80 aa)). Glutathione-binding positions include 14-15 (SV), 40-41 (SK), 54-55 (KM), and 67-68 (ES). The 132-residue stretch at 90-221 (HPYDRAIARF…TKLAEFARKL (132 aa)) folds into the GST C-terminal domain.

The protein belongs to the GST superfamily. Tau family.

The protein resides in the cytoplasm. Its subcellular location is the cytosol. The catalysed reaction is RX + glutathione = an S-substituted glutathione + a halide anion + H(+). May be involved in the conjugation of reduced glutathione to a wide number of exogenous and endogenous hydrophobic electrophiles and have a detoxification role against certain herbicides. The sequence is that of Glutathione S-transferase U18 (GSTU18) from Arabidopsis thaliana (Mouse-ear cress).